The sequence spans 441 residues: Signal recognition particle 54 kDa protein (441 aa).

GTP contacts are provided by residues 104-111 (GLQGSGKT), 186-190 (DTAGR), and 244-247 (TKLD).

Belongs to the GTP-binding SRP family. SRP54 subfamily. Part of the signal recognition particle protein translocation system, which is composed of SRP and FtsY. Archaeal SRP consists of a 7S RNA molecule of 300 nucleotides and two protein subunits: SRP54 and SRP19.

It is found in the cytoplasm. It carries out the reaction GTP + H2O = GDP + phosphate + H(+). Functionally, involved in targeting and insertion of nascent membrane proteins into the cytoplasmic membrane. Binds to the hydrophobic signal sequence of the ribosome-nascent chain (RNC) as it emerges from the ribosomes. The SRP-RNC complex is then targeted to the cytoplasmic membrane where it interacts with the SRP receptor FtsY. The sequence is that of Signal recognition particle 54 kDa protein from Staphylothermus marinus (strain ATCC 43588 / DSM 3639 / JCM 9404 / F1).